The primary structure comprises 345 residues: MSHELTLQQRLEVQAGPDPLHRAVKEAVAALAQAAIDISDLTCRGALAGITGEAQGRNTDGDIQKDLDVRADQIIRDALSALPIAVLASEEMAELDILNPGAPISVAFDPLDGSSNINTNISVGTIFSIMPTPPDASAAFTQPGSAQLAAGFVVYGPQTSLILTLGQGVDIFTLDRVERVFKLTGSMMQIPADATEFAINTSNRRHWDLPVRAYIDECLMGADGPSGKNFNMRWIGSLVAEAFRILVRGGIFLYPGDARDGYEDGRLRLVYEAHPMAFIIEQAGGGASTGRKRILDIVPGSLHQRVPLIMGSIKNVRRLEDMHTGPNVALEANAPLFGHRGLFRV.

The Mg(2+) site is built by Glu90, Asp109, Leu111, and Asp112. Substrate is bound by residues Asp112–Ser115 and Asn200. Mg(2+) is bound at residue Glu272.

Belongs to the FBPase class 1 family. Homotetramer. The cofactor is Mg(2+).

Its subcellular location is the cytoplasm. It carries out the reaction beta-D-fructose 1,6-bisphosphate + H2O = beta-D-fructose 6-phosphate + phosphate. It participates in carbohydrate biosynthesis; gluconeogenesis. The chain is Fructose-1,6-bisphosphatase class 1 2 from Nitrobacter hamburgensis (strain DSM 10229 / NCIMB 13809 / X14).